A 60-amino-acid chain; its full sequence is MAHHEEQHGGHHHHHHHTHHHHYHGGEHHHHHHSSHHEEGCCSTSDSHHQEEGCCHGHHE.

Residues 1–60 (MAHHEEQHGGHHHHHHHTHHHHYHGGEHHHHHHSSHHEEGCCSTSDSHHQEEGCCHGHHE) are disordered. Residues 10 to 35 (GHHHHHHHTHHHHYHGGEHHHHHHSS) show a composition bias toward basic residues. Basic and acidic residues predominate over residues 36 to 60 (HHEEGCCSTSDSHHQEEGCCHGHHE). 2 repeat units span residues 38–42 (EEGCC) and 51–55 (EEGCC). The 2 X 5 AA repeats of E-E-G-C-C stretch occupies residues 38 to 55 (EEGCCSTSDSHHQEEGCC).

Strongly binds nickel and zinc. Binds other metals less strongly: cobalt &gt; copper &gt; cadmium &gt; manganese. May act to increase, or at least to preserve, urease activity. Exact function is still unknown. The polypeptide is Histidine-rich metal-binding polypeptide (hpn) (Helicobacter pylori (strain J99 / ATCC 700824) (Campylobacter pylori J99)).